The following is a 604-amino-acid chain: Aspartate--tRNA(Asp/Asn) ligase (604 aa).

L-aspartate is bound at residue Glu175. The segment at 199–202 (QQFK) is aspartate. L-aspartate-binding residues include Arg221 and His456. An ATP-binding site is contributed by 221–223 (RDE). ATP is bound at residue Glu496. Arg503 is a binding site for L-aspartate. 548–551 (GVDR) serves as a coordination point for ATP.

It belongs to the class-II aminoacyl-tRNA synthetase family. Type 1 subfamily. As to quaternary structure, homodimer.

It is found in the cytoplasm. The enzyme catalyses tRNA(Asx) + L-aspartate + ATP = L-aspartyl-tRNA(Asx) + AMP + diphosphate. Aspartyl-tRNA synthetase with relaxed tRNA specificity since it is able to aspartylate not only its cognate tRNA(Asp) but also tRNA(Asn). Reaction proceeds in two steps: L-aspartate is first activated by ATP to form Asp-AMP and then transferred to the acceptor end of tRNA(Asp/Asn). The sequence is that of Aspartate--tRNA(Asp/Asn) ligase from Methylorubrum populi (strain ATCC BAA-705 / NCIMB 13946 / BJ001) (Methylobacterium populi).